The following is a 306-amino-acid chain: Curved DNA-binding protein (306 aa).

Positions 5-69 (DYYAIMGVKP…QRRAEYDQMW (65 aa)) constitute a J domain.

It localises to the cytoplasm. Its subcellular location is the nucleoid. Its function is as follows. DNA-binding protein that preferentially recognizes a curved DNA sequence. It is probably a functional analog of DnaJ; displays overlapping activities with DnaJ, but functions under different conditions, probably acting as a molecular chaperone in an adaptive response to environmental stresses other than heat shock. Lacks autonomous chaperone activity; binds native substrates and targets them for recognition by DnaK. Its activity is inhibited by the binding of CbpM. The sequence is that of Curved DNA-binding protein from Escherichia coli (strain 55989 / EAEC).